The chain runs to 265 residues: Hydroxyethylthiazole kinase (265 aa).

Residue M50 coordinates substrate. ATP is bound by residues R125 and T171. Substrate is bound at residue G198.

It belongs to the Thz kinase family. Mg(2+) serves as cofactor.

It carries out the reaction 5-(2-hydroxyethyl)-4-methylthiazole + ATP = 4-methyl-5-(2-phosphooxyethyl)-thiazole + ADP + H(+). It functions in the pathway cofactor biosynthesis; thiamine diphosphate biosynthesis; 4-methyl-5-(2-phosphoethyl)-thiazole from 5-(2-hydroxyethyl)-4-methylthiazole: step 1/1. Functionally, catalyzes the phosphorylation of the hydroxyl group of 4-methyl-5-beta-hydroxyethylthiazole (THZ). This Salmonella newport (strain SL254) protein is Hydroxyethylthiazole kinase.